Here is a 300-residue protein sequence, read N- to C-terminus: Ubiquinone biosynthesis protein COQ4, mitochondrial (300 aa).

Histidine 173, aspartate 174, histidine 177, and glutamate 189 together coordinate Zn(2+).

The protein belongs to the COQ4 family. Component of a multi-subunit COQ enzyme complex, composed of at least COQ3, COQ4, COQ5, COQ6, COQ7 and COQ9. Requires Zn(2+) as cofactor.

It is found in the mitochondrion inner membrane. It carries out the reaction a 4-hydroxy-3-methoxy-5-(all-trans-polyprenyl)benzoate + H(+) = a 2-methoxy-6-(all-trans-polyprenyl)phenol + CO2. Its pathway is cofactor biosynthesis; ubiquinone biosynthesis. In terms of biological role, lyase that catalyzes the C1-decarboxylation of 4-hydroxy-3-methoxy-5-(all-trans-polyprenyl)benzoic acid into 2-methoxy-6-(all-trans-polyprenyl)phenol during ubiquinone biosynthesis. The protein is Ubiquinone biosynthesis protein COQ4, mitochondrial of Cryptococcus neoformans var. neoformans serotype D (strain B-3501A) (Filobasidiella neoformans).